Consider the following 108-residue polypeptide: DNA-directed RNA polymerase III subunit RPC10 (108 aa).

Zn(2+) contacts are provided by Cys5, Cys8, Cys25, Cys28, Cys69, and Cys72. A C4-type zinc finger spans residues Cys5–Cys28. A TFIIS-type zinc finger spans residues Thr65–Arg107. A Hairpin motif is present at residues Asp88–Glu89. Zn(2+) is bound by residues Cys98 and Cys102.

This sequence belongs to the archaeal RpoM/eukaryotic RPA12/RPB9/RPC11 RNA polymerase family. As to quaternary structure, component of the RNA polymerase III complex consisting of 17 subunits: a ten-subunit horseshoe-shaped catalytic core composed of POLR3A/RPC1, POLR3B/RPC2, POLR1C/RPAC1, POLR1D/RPAC2, POLR3K/RPC10, POLR2E/RPABC1, POLR2F/RPABC2, POLR2H/RPABC3, POLR2K/RPABC4 and POLR2L/RPABC5; a mobile stalk composed of two subunits POLR3H/RPC8 and CRCP/RPC9, protruding from the core and functioning primarily in transcription initiation; and additional subunits homologous to general transcription factors of the RNA polymerase II machinery, POLR3C/RPC3-POLR3F/RPC6-POLR3G/RPC7 heterotrimer required for transcription initiation and POLR3D/RPC4-POLR3E/RPC5 heterodimer involved in both transcription initiation and termination.

It localises to the nucleus. Functionally, core component of RNA polymerase III (Pol III) which synthesizes small non-coding RNAs using the four ribonucleoside triphosphates as substrates. Can mediate Pol I proofreading of the nascent RNA transcript. Anchors into the Pol III active site to constantly monitor transcription fidelity, cleaves mis-incorporated 5'-ribonucleotides and restarts the transcription process. Once Pol III reaches the poly(dT) termination signal, can induce Pol III clamp opening and transcription termination. Pol III plays an important role in sensing and limiting infection by intracellular bacteria and DNA viruses. Acts as a nuclear and cytosolic DNA sensor involved in innate immune response. Can sense non-self dsDNA that serves as template for transcription into dsRNA. The non-self RNA polymerase III transcripts, such as Epstein-Barr virus-encoded RNAs (EBERs) induce type I interferon and NF-kappa-B through the RIG-I pathway. In Mus musculus (Mouse), this protein is DNA-directed RNA polymerase III subunit RPC10.